The sequence spans 85 residues: MRLCVCSAVDWTTHRSSAGEFCGCQLRTPKEQYLSVNLSGTRTARDYDASGKRWRPLAVLTRRWGKAIHLTVDRVAESLRRLACR.

This is an uncharacterized protein from Mycobacterium tuberculosis (strain CDC 1551 / Oshkosh).